Reading from the N-terminus, the 257-residue chain is 5'-nucleotidase SurE (257 aa).

The a divalent metal cation site is built by Asp8, Asp9, Ser40, and Asn92.

This sequence belongs to the SurE nucleotidase family. Requires a divalent metal cation as cofactor.

The protein resides in the cytoplasm. The enzyme catalyses a ribonucleoside 5'-phosphate + H2O = a ribonucleoside + phosphate. Nucleotidase that shows phosphatase activity on nucleoside 5'-monophosphates. The chain is 5'-nucleotidase SurE from Rhizobium rhizogenes (strain K84 / ATCC BAA-868) (Agrobacterium radiobacter).